The following is a 678-amino-acid chain: DNA ligase (678 aa).

Residues 32 to 36, 81 to 82, and glutamate 113 each bind NAD(+); these read DSEYD and SL. Lysine 115 acts as the N6-AMP-lysine intermediate in catalysis. The NAD(+) site is built by arginine 136, glutamate 174, lysine 291, and lysine 315. Zn(2+) contacts are provided by cysteine 409, cysteine 412, cysteine 427, and cysteine 433. The region spanning 596–678 is the BRCT domain; it reads ASDNPFAGKT…MRLLGESSDA (83 aa).

It belongs to the NAD-dependent DNA ligase family. LigA subfamily. Mg(2+) serves as cofactor. The cofactor is Mn(2+).

It carries out the reaction NAD(+) + (deoxyribonucleotide)n-3'-hydroxyl + 5'-phospho-(deoxyribonucleotide)m = (deoxyribonucleotide)n+m + AMP + beta-nicotinamide D-nucleotide.. Its function is as follows. DNA ligase that catalyzes the formation of phosphodiester linkages between 5'-phosphoryl and 3'-hydroxyl groups in double-stranded DNA using NAD as a coenzyme and as the energy source for the reaction. It is essential for DNA replication and repair of damaged DNA. The chain is DNA ligase from Sodalis glossinidius (strain morsitans).